The chain runs to 368 residues: Ferrochelatase (368 aa).

Residues H209 and E290 each coordinate Fe cation. The segment at 347-368 is disordered; the sequence is REEQEQQAHISREEARRLGADQ.

It belongs to the ferrochelatase family.

The protein resides in the cytoplasm. It catalyses the reaction heme b + 2 H(+) = protoporphyrin IX + Fe(2+). It functions in the pathway porphyrin-containing compound metabolism; protoheme biosynthesis; protoheme from protoporphyrin-IX: step 1/1. In terms of biological role, catalyzes the ferrous insertion into protoporphyrin IX. This chain is Ferrochelatase, found in Janthinobacterium sp. (strain Marseille) (Minibacterium massiliensis).